A 149-amino-acid polypeptide reads, in one-letter code: MKMFHKIYFGDSVVKLTEEMVKSLENEIVFIATASKDGVPNVAAMRAIKVLDAEKGIVLIADNFMNKTLKNILENPKVALTTANCKDMPYQYKGTAEYYKEGEYLKIAEEVDKALKPDLKPKGAVVIKITEIYNLKSGPDAGKLIAKDE.

This is an uncharacterized protein from Methanocaldococcus jannaschii (strain ATCC 43067 / DSM 2661 / JAL-1 / JCM 10045 / NBRC 100440) (Methanococcus jannaschii).